A 308-amino-acid polypeptide reads, in one-letter code: tRNA pseudouridine synthase B (308 aa).

The Nucleophile role is filled by D37.

It belongs to the pseudouridine synthase TruB family. Type 1 subfamily.

The enzyme catalyses uridine(55) in tRNA = pseudouridine(55) in tRNA. Responsible for synthesis of pseudouridine from uracil-55 in the psi GC loop of transfer RNAs. The protein is tRNA pseudouridine synthase B of Deinococcus radiodurans (strain ATCC 13939 / DSM 20539 / JCM 16871 / CCUG 27074 / LMG 4051 / NBRC 15346 / NCIMB 9279 / VKM B-1422 / R1).